Reading from the N-terminus, the 1558-residue chain is MEDGGLGMDAELGADSARRKMEAAGEALEIVPLEMYDSARAKIAANLRWLFAKAFGIDHIPEDLRDPFYRDQYEQEHIKPPVIRLLLSCELYCRVCALILKGDQVASLQSHQSVIQALSRKGIYVMEDDDTPVTDSDLTCQPIKMSSHIPMIDALMMAYTVEMISIEKVVSCVKRFSTFSASKELPFDLEDAMIFWINKVNLKMREITEKEHKSKQHLLESPSHQKSPSKWYWKLVPVRYRRDHASGRQLPYFQMLEDLIRDVCDGAALLTVVHYYCPELMKLDDICLKEVTSIADSLYNIQLLKEFANEYLNKSFYLTLEDLLYAPPVLKHNVMVFIAELFWWFEIVKPEFVQPRDVQEFKDARAVSQPKSARPTVPISNATKRSFLVSPGAADPVLPVQNSPEVCNSNKGSSGFSPSHPLLPLRQRQKKAQPAEESTACRNRSNSLTQEGHPRGSVAWSDKRQRPLSQLNRYVLHSATDSDADLASGDSVSLTCSISEDSLASTVTPKHQSHPGQGSVRRINGHSLLGNVNMDEEEELVAIARADPSKNDITLTNSEDTERQGVTPGAKSIWGRQEDASSDSRTASFFLEPLMPAVLRPAKEKSISLNKEEESGEGRQRGSTRRVAGAESAASSTRRRPPQTLNRTFTPNTSSEFETTIEPKSSEFVPPAPGQMQAFRPLVTSSVEPSSAERSPGFYLHSSVTEEKRPVQAWDAHPGTSDIETVETIEEQDAELTKELHPDKKQHFEEEVESAKLREDMNVKEHEDKDGGSRCSSPGQQSQVSSVASGSIRMTSFAERKMQRFGSNQDIRSSTSSSQRTTPDGSESCPLPLTSWRMKRDQSPTPQNKDNANMLASELVQLHMQLEEKRRAIESQKKKMEILTARQRLKLGKAAFLHIVKKGKSDTLPQPTKSEFYLKEGQKLNEEKEVSSKDDTCVDALRDRSKEAEEPEKASCEWAGGGTVSSSPLDVEEEVDLNECNRSIELLNEAIGSIQQQMMQLSLQQEMLMKQNIQSPTSATSPLANDQINTSEPRVRASIHFVEPSGSPVVRKPPKLSSARPRSKPSELLLGKEHSKGQKSSTPTPTDSPSARSIQGGRTPKAESQDFVQSSVRSESFNKDKGNHKGTTFHLNDEANMRMVSREPSSVALGVTFEESMSLRDTETTFDDGTARDNLISSEDISRGKANLIEVDLSDLAANTDDESTNALDVTADGSDGEKKSGMGFFFKDEQKAEDELAKKRAAFLLKQQRKAEEARLRKQQLEAESEQKRDETRRKAEEERIRKEEEKARRELIKQEYLRKKQLELCEEQEQPQPKPKTKPKKQRLKSVVKEEPSIDPLPKCPAANENLISAQSGSSLSLASVATTEPDSVNSGGAGSQRGESVESFPGLSRNSSRTTERDWDNGSTASSITSTSMAEYTGPKLFKEPSAKSNKPIIHNAISHCCLAGKVNEPQKNSILEELERCESNHLMILFRDSGCQFRALYSYFPDTEEIHKLTGTGPKSITKKMIDKLYKYSSDRKQFTVIPAKTVSVSVDALTIHNHLWQAKRPAGPKKSAK.

One can recognise a Calponin-homology (CH) domain in the interval 231-346 (WYWKLVPVRY…FIAELFWWFE (116 aa)). Composition is skewed to polar residues over residues 400–417 (VQNSPEVCNSNKGSSGFS), 440–450 (ACRNRSNSLTQ), and 504–516 (ASTVTPKHQSHPG). Disordered stretches follow at residues 400–464 (VQNS…SDKR), 504–523 (ASTVTPKHQSHPGQGSVRRI), 551–585 (NDITLTNSEDTERQGVTPGAKSIWGRQEDASSDSR), 602–675 (AKEK…APGQ), 737–790 (TKEL…VASG), 803–850 (QRFG…QNKD), and 943–968 (DRSKEAEEPEKASCEWAGGGTVSSSP). Over residues 602 to 620 (AKEKSISLNKEEESGEGRQ) the composition is skewed to basic and acidic residues. The segment covering 643–658 (QTLNRTFTPNTSSEFE) has biased composition (polar residues). The span at 737–772 (TKELHPDKKQHFEEEVESAKLREDMNVKEHEDKDGG) shows a compositional bias: basic and acidic residues. Low complexity-rich tracts occupy residues 776–790 (SSPGQQSQVSSVASG) and 812–822 (RSSTSSSQRTT). A coiled-coil region spans residues 849 to 887 (KDNANMLASELVQLHMQLEEKRRAIESQKKKMEILTARQ). Basic and acidic residues predominate over residues 943–955 (DRSKEAEEPEKAS). The stretch at 971-1004 (VEEEVDLNECNRSIELLNEAIGSIQQQMMQLSLQ) forms a coiled coil. Disordered regions lie at residues 1041 to 1131 (FVEP…TFHL), 1257 to 1293 (LRKQQLEAESEQKRDETRRKAEEERIRKEEEKARREL), 1305 to 1344 (ELCEEQEQPQPKPKTKPKKQRLKSVVKEEPSIDPLPKCPA), and 1360 to 1414 (LASV…ITST). Residues 1080–1090 (SSTPTPTDSPS) show a composition bias toward low complexity. Residues 1106 to 1115 (DFVQSSVRSE) show a composition bias toward polar residues. Residues 1243-1303 (AFLLKQQRKA…IKQEYLRKKQ (61 aa)) are a coiled coil. Residues 1317 to 1328 (PKTKPKKQRLKS) are compositionally biased toward basic residues. Residues 1421–1555 (GPKLFKEPSA…QAKRPAGPKK (135 aa)) enclose the CKK domain.

It belongs to the CAMSAP1 family.

It localises to the cytoplasm. The protein resides in the cytoskeleton. Its function is as follows. Key microtubule-organizing protein that specifically binds the minus-end of non-centrosomal microtubules and regulates their dynamics and organization. Specifically recognizes growing microtubule minus-ends and stabilizes microtubules. Acts on free microtubule minus-ends that are not capped by microtubule-nucleating proteins or other factors and protects microtubule minus-ends from depolymerization. In contrast to camsap2 and camsap3, tracks along the growing tips of minus-end microtubules without significantly affecting the polymerization rate: binds at the very tip of the microtubules minus-end and acts as a minus-end tracking protein (-TIP) that dissociates from microtubules after allowing tubulin incorporation. Through interaction with spectrin may regulate neurite outgrowth. This Danio rerio (Zebrafish) protein is Calmodulin-regulated spectrin-associated protein 1-B (camsap1b).